A 567-amino-acid chain; its full sequence is Probable diguanylate cyclase DgcQ (567 aa).

2 consecutive transmembrane segments (helical) span residues 20-40 (FGPG…STLL) and 357-377 (IALT…WGVI). The region spanning 425–560 (QPFSVIQLDL…GRNRICASDA (136 aa)) is the GGDEF domain. A Mg(2+)-binding site is contributed by Asp433. Residues Asn441, His446, and Asp450 each contribute to the substrate site. Mg(2+) is bound at residue Glu476. Glu476 (proton acceptor) is an active-site residue.

Homodimer. Mg(2+) serves as cofactor.

It is found in the cell inner membrane. It carries out the reaction 2 GTP = 3',3'-c-di-GMP + 2 diphosphate. Its pathway is glycan metabolism; bacterial cellulose biosynthesis. It functions in the pathway purine metabolism; 3',5'-cyclic di-GMP biosynthesis. Catalyzes the synthesis of cyclic-di-GMP (c-di-GMP) via the condensation of 2 GTP molecules. Cyclic-di-GMP is a second messenger which controls cell surface-associated traits in bacteria. Involved in the regulation of cellulose production. The protein is Probable diguanylate cyclase DgcQ of Salmonella typhi.